Consider the following 534-residue polypeptide: Putative fimbrium tip subunit Fim1C (534 aa).

The N-terminal stretch at 1 to 21 is a signal peptide; the sequence is MKQYKLMQVALLAILLFGWAG. Cys-22 carries the N-palmitoyl cysteine lipid modification. A lipid anchor (S-diacylglycerol cysteine) is attached at Cys-22. A propeptide spanning residues 22–54 is cleaved from the precursor; that stretch reads CSQNEEEVPGNVRNGIVLNVTDTGIISNEPSTR.

Belongs to the bacteroidetes fimbrillin superfamily. Mfa-like family. As to quaternary structure, may be part of the fimbrial tip.

It localises to the fimbrium. The protein resides in the cell outer membrane. In terms of biological role, probably a component of the fimbrium tip. Fimbriae are filamentous appendages on the cell surface that mediate cell adhesion and biofilm formation. In Bacteroides ovatus (strain ATCC 8483 / DSM 1896 / JCM 5824 / BCRC 10623 / CCUG 4943 / NCTC 11153), this protein is Putative fimbrium tip subunit Fim1C.